Reading from the N-terminus, the 132-residue chain is UPF0299 membrane protein YohJ (132 aa).

A run of 4 helical transmembrane segments spans residues 7–27 (IIWQ…AGIF), 31–51 (LLPI…VLLA), 63–83 (GCYV…VGVM), and 93–113 (FGPV…VVSW).

It belongs to the UPF0299 family.

The protein localises to the cell inner membrane. This chain is UPF0299 membrane protein YohJ, found in Salmonella arizonae (strain ATCC BAA-731 / CDC346-86 / RSK2980).